The primary structure comprises 555 residues: Esterase-5A (555 aa).

The signal sequence occupies residues 1 to 19 (MHLVRWLICLIQLWIQLGA). C87 and C106 are oxidised to a cystine. N-linked (GlcNAc...) asparagine glycosylation is found at N95 and N116. S210 (acyl-ester intermediate) is an active-site residue. A disulfide bond links C262 and C274. Residues N479 and N510 are each glycosylated (N-linked (GlcNAc...) asparagine). An intrachain disulfide couples C518 to C539.

This sequence belongs to the type-B carboxylesterase/lipase family.

It is found in the secreted. It carries out the reaction a carboxylic ester + H2O = an alcohol + a carboxylate + H(+). This Drosophila miranda (Fruit fly) protein is Esterase-5A (Est-5A).